The primary structure comprises 218 residues: Methylthioribulose-1-phosphate dehydratase (218 aa).

Zn(2+) contacts are provided by His107 and His109.

Belongs to the aldolase class II family. MtnB subfamily. Requires Zn(2+) as cofactor.

The enzyme catalyses 5-(methylsulfanyl)-D-ribulose 1-phosphate = 5-methylsulfanyl-2,3-dioxopentyl phosphate + H2O. It participates in amino-acid biosynthesis; L-methionine biosynthesis via salvage pathway; L-methionine from S-methyl-5-thio-alpha-D-ribose 1-phosphate: step 2/6. Catalyzes the dehydration of methylthioribulose-1-phosphate (MTRu-1-P) into 2,3-diketo-5-methylthiopentyl-1-phosphate (DK-MTP-1-P). The polypeptide is Methylthioribulose-1-phosphate dehydratase (Xylella fastidiosa (strain M12)).